The chain runs to 220 residues: RING-H2 finger protein ATL77 (220 aa).

A helical transmembrane segment spans residues 53-73 (LMLLSILLCGIICSLGLHYII). An RING-type; atypical zinc finger spans residues 130-172 (CVICLSDFVAGEQLRVLPKCNHGFHLRCIDKWLTQHMTCPKCR).

It belongs to the RING-type zinc finger family. ATL subfamily.

Its subcellular location is the membrane. It catalyses the reaction S-ubiquitinyl-[E2 ubiquitin-conjugating enzyme]-L-cysteine + [acceptor protein]-L-lysine = [E2 ubiquitin-conjugating enzyme]-L-cysteine + N(6)-ubiquitinyl-[acceptor protein]-L-lysine.. It functions in the pathway protein modification; protein ubiquitination. This is RING-H2 finger protein ATL77 (ATL77) from Arabidopsis thaliana (Mouse-ear cress).